Here is a 348-residue protein sequence, read N- to C-terminus: RNA 3'-terminal phosphate cyclase (348 aa).

Residues Gln-107 and 290–294 (HLADQ) each bind ATP. His-316 serves as the catalytic Tele-AMP-histidine intermediate.

The protein belongs to the RNA 3'-terminal cyclase family. Type 1 subfamily.

It is found in the cytoplasm. The catalysed reaction is a 3'-end 3'-phospho-ribonucleotide-RNA + ATP = a 3'-end 2',3'-cyclophospho-ribonucleotide-RNA + AMP + diphosphate. Catalyzes the conversion of 3'-phosphate to a 2',3'-cyclic phosphodiester at the end of RNA. The mechanism of action of the enzyme occurs in 3 steps: (A) adenylation of the enzyme by ATP; (B) transfer of adenylate to an RNA-N3'P to produce RNA-N3'PP5'A; (C) and attack of the adjacent 2'-hydroxyl on the 3'-phosphorus in the diester linkage to produce the cyclic end product. The biological role of this enzyme is unknown but it is likely to function in some aspects of cellular RNA processing. This is RNA 3'-terminal phosphate cyclase from Trichormus variabilis (strain ATCC 29413 / PCC 7937) (Anabaena variabilis).